A 222-amino-acid polypeptide reads, in one-letter code: UPF0128 protein TK2294 (222 aa).

The protein belongs to the UPF0128 family.

The polypeptide is UPF0128 protein TK2294 (Thermococcus kodakarensis (strain ATCC BAA-918 / JCM 12380 / KOD1) (Pyrococcus kodakaraensis (strain KOD1))).